A 191-amino-acid chain; its full sequence is Elongation factor P 1 (191 aa).

This sequence belongs to the elongation factor P family.

The protein localises to the cytoplasm. It participates in protein biosynthesis; polypeptide chain elongation. Involved in peptide bond synthesis. Stimulates efficient translation and peptide-bond synthesis on native or reconstituted 70S ribosomes in vitro. Probably functions indirectly by altering the affinity of the ribosome for aminoacyl-tRNA, thus increasing their reactivity as acceptors for peptidyl transferase. The chain is Elongation factor P 1 from Lactobacillus acidophilus (strain ATCC 700396 / NCK56 / N2 / NCFM).